The following is a 79-amino-acid chain: Conotoxin Cl9.4 (79 aa).

An N-terminal signal peptide occupies residues 1 to 23; it reads MNCYLILTVALLLTSAMTGTTTA. A propeptide spanning residues 24–37 is cleaved from the precursor; the sequence is GQLNKKGVTLREDD. Intrachain disulfides connect C41–C58, C46–C68, and C48–C73.

Expressed by the venom duct.

Its subcellular location is the secreted. The polypeptide is Conotoxin Cl9.4 (Californiconus californicus (California cone)).